A 146-amino-acid chain; its full sequence is PTS system fructose-specific EIIA component (146 aa).

The region spanning 1 to 124 is the PTS EIIA type-4 domain; it reads MISVIISGHG…NLKAMSQQSF (124 aa). His-9 serves as the catalytic Tele-phosphohistidine intermediate. At His-9 the chain carries Phosphohistidine; by HPr.

Its subcellular location is the cytoplasm. The phosphoenolpyruvate-dependent sugar phosphotransferase system (sugar PTS), a major carbohydrate active transport system, catalyzes the phosphorylation of incoming sugar substrates concomitantly with their translocation across the cell membrane. The enzyme II LevDE PTS system is involved in fructose transport. In terms of biological role, levD and LevE act as negative regulators of the levanase operon. They may be involved in a PTS-mediated phosphorylation of a regulator. The chain is PTS system fructose-specific EIIA component from Bacillus subtilis (strain 168).